The chain runs to 142 residues: Endoribonuclease YbeY (142 aa).

Zn(2+) contacts are provided by histidine 100, histidine 104, and histidine 110.

It belongs to the endoribonuclease YbeY family. It depends on Zn(2+) as a cofactor.

It localises to the cytoplasm. Single strand-specific metallo-endoribonuclease involved in late-stage 70S ribosome quality control and in maturation of the 3' terminus of the 16S rRNA. The sequence is that of Endoribonuclease YbeY from Helicobacter pylori (strain G27).